A 417-amino-acid chain; its full sequence is NADH-quinone oxidoreductase subunit D (417 aa).

Belongs to the complex I 49 kDa subunit family. As to quaternary structure, NDH-1 is composed of 14 different subunits. Subunits NuoB, C, D, E, F, and G constitute the peripheral sector of the complex.

It is found in the cell inner membrane. The catalysed reaction is a quinone + NADH + 5 H(+)(in) = a quinol + NAD(+) + 4 H(+)(out). Its function is as follows. NDH-1 shuttles electrons from NADH, via FMN and iron-sulfur (Fe-S) centers, to quinones in the respiratory chain. The immediate electron acceptor for the enzyme in this species is believed to be ubiquinone. Couples the redox reaction to proton translocation (for every two electrons transferred, four hydrogen ions are translocated across the cytoplasmic membrane), and thus conserves the redox energy in a proton gradient. This chain is NADH-quinone oxidoreductase subunit D, found in Legionella pneumophila subsp. pneumophila (strain Philadelphia 1 / ATCC 33152 / DSM 7513).